The chain runs to 173 residues: Ribosome maturation factor RimP (173 aa).

This sequence belongs to the RimP family.

Its subcellular location is the cytoplasm. Functionally, required for maturation of 30S ribosomal subunits. This Chlorobium phaeobacteroides (strain DSM 266 / SMG 266 / 2430) protein is Ribosome maturation factor RimP.